The chain runs to 75 residues: MKNKPDDRKDNVDKIQYNITKTIQNCELADEMIAKTDDEKTKKTLIEKNERRREALDGMREEIKDEARDKKNGYM.

Positions arginine 53–methionine 75 are disordered.

It belongs to the Tlp family.

This Clostridium botulinum (strain Langeland / NCTC 10281 / Type F) protein is Protein Tlp homolog.